A 226-amino-acid polypeptide reads, in one-letter code: Glutathione peroxidase 3 (226 aa).

The N-terminal stretch at Met1–Gly24 is a signal peptide. The active site involves Sec73. A non-standard amino acid (selenocysteine) is located at residue Sec73.

This sequence belongs to the glutathione peroxidase family. As to quaternary structure, homotetramer. As to expression, secreted in plasma.

The protein resides in the secreted. The enzyme catalyses 2 glutathione + H2O2 = glutathione disulfide + 2 H2O. The catalysed reaction is tert-butyl hydroperoxide + 2 glutathione = tert-butanol + glutathione disulfide + H2O. In terms of biological role, protects cells and enzymes from oxidative damage, by catalyzing the reduction of hydrogen peroxide, lipid peroxides and organic hydroperoxide, by glutathione. The sequence is that of Glutathione peroxidase 3 from Pongo pygmaeus (Bornean orangutan).